The following is a 492-amino-acid chain: NADH-quinone oxidoreductase subunit N (492 aa).

Helical transmembrane passes span 13 to 33 (MLPVLLVLVGAIVSTLGGFWL), 43 to 63 (ILFVLASGASLVWLWGGAPWA), 82 to 102 (AALLLGGTVLLGALLTLLVSL), 110 to 132 (VSFAEFDALLMYAVTGCLLIAFS), 136 to 155 (IVMLIGLEIMSLASYVLATL), 169 to 189 (FLLGSVGSAILIYGLAFLYGA), 210 to 230 (IGILVTGTLLVLSGFGVKIAL), 245 to 265 (PTLVSLFLSTVVKVAAFAGML), 272 to 292 (LAAGPGWHSVLQILVALTLVI), 306 to 326 (LLAYSAVAHTGFLAMTLLGDT), 331 to 351 (AALGYYLLVYTLMTVGALAVV), 377 to 397 (AVALAFCLASLAGLPPFAGFF), 410 to 430 (GYLLISVLAVLSSVAALVYYL), and 457 to 477 (VAVALSLIGIVVLGLLPNLWY).

The protein belongs to the complex I subunit 2 family. In terms of assembly, NDH-1 is composed of 15 different subunits. Subunits NuoA, H, J, K, L, M, N constitute the membrane sector of the complex.

The protein localises to the cell membrane. The catalysed reaction is a quinone + NADH + 5 H(+)(in) = a quinol + NAD(+) + 4 H(+)(out). Functionally, NDH-1 shuttles electrons from NADH, via FMN and iron-sulfur (Fe-S) centers, to quinones in the respiratory chain. The immediate electron acceptor for the enzyme in this species is believed to be a menaquinone. Couples the redox reaction to proton translocation (for every two electrons transferred, four hydrogen ions are translocated across the cytoplasmic membrane), and thus conserves the redox energy in a proton gradient. The protein is NADH-quinone oxidoreductase subunit N of Deinococcus radiodurans (strain ATCC 13939 / DSM 20539 / JCM 16871 / CCUG 27074 / LMG 4051 / NBRC 15346 / NCIMB 9279 / VKM B-1422 / R1).